Reading from the N-terminus, the 353-residue chain is Thrombopoietin (353 aa).

An N-terminal signal peptide occupies residues 1–21; it reads MELTELLLVVMLLLTARLTLS. O-linked (GalNAc...) serine glycosylation occurs at Ser-22. Intrachain disulfides connect Cys-28–Cys-172 and Cys-50–Cys-106. 4 O-linked (GalNAc...) threonine glycosylation sites follow: Thr-58, Thr-131, Thr-179, and Thr-180. The O-linked (GalNAc...) serine glycan is linked to Ser-184. N-linked (GlcNAc...) (complex) asparagine glycans are attached at residues Asn-197 and Asn-206. O-linked (GalNAc...) threonine glycosylation is present at Thr-213. Asn-234 and Asn-255 each carry an N-linked (GlcNAc...) (complex) asparagine glycan. The segment at 257–353 is disordered; sequence TRGLFPGPSR…THSQNLSQEG (97 aa). O-linked (GalNAc...) serine glycosylation is present at Ser-265. The span at 275 to 304 shows a compositional bias: polar residues; that stretch reads SSGTSDTGSLPPNLQPGYSPSPTHPPTGQY. Residues 324 to 335 are compositionally biased toward pro residues; that stretch reads LPDPSAPTPTPT. N-linked (GlcNAc...) asparagine glycans are attached at residues Asn-340 and Asn-348. The segment covering 343–353 has biased composition (polar residues); the sequence is YTHSQNLSQEG.

Belongs to the EPO/TPO family. In terms of assembly, interacts with MPL/TPOR.

The protein localises to the secreted. In terms of biological role, lineage-specific cytokine affecting the proliferation and maturation of megakaryocytes from their committed progenitor cells. It acts at a late stage of megakaryocyte development. It may be the major physiological regulator of circulating platelets. The polypeptide is Thrombopoietin (THPO) (Homo sapiens (Human)).